We begin with the raw amino-acid sequence, 507 residues long: Subtilisin-like protease 1 (507 aa).

A signal peptide spans 1 to 19 (MGVFRFISISLAAVSAANA). Residues 20–116 (AQILSMPHAQ…VEPDTIISVN (97 aa)) constitute a propeptide that is removed on maturation. The region spanning 34-113 (SYIVMMKDDT…VMFVEPDTII (80 aa)) is the Inhibitor I9 domain. A Peptidase S8 domain is found at 126–400 (SWGLARISNS…NVLISNGGAK (275 aa)). Residues Asp-158 and His-190 each act as charge relay system in the active site. Residues 175–198 (GSNQVNDGDDRDGSGHGTHTSGTM) are disordered. Asn-251 carries N-linked (GlcNAc...) asparagine glycosylation. Polar residues predominate over residues 282–294 (NENQDARSSSPAS). The tract at residues 282–312 (NENQDARSSSPASEPSVCTVGSSAEDDSRSS) is disordered. Ser-345 acts as the Charge relay system in catalysis. Residues 378-394 (SSSITDVGPGTPTNVLI) show a composition bias toward polar residues. The disordered stretch occupies residues 378–486 (SSSITDVGPG…YPGGDNFDFD (109 aa)). Composition is skewed to pro residues over residues 405–428 (KPAPGPSPNPSQPSEPQQPAPSQP) and 438–449 (EPFPGEPFPGEP). Over residues 450–461 (FPGESSPGESAP) the composition is skewed to low complexity. A compositionally biased stretch (pro residues) spans 462–476 (APAPMPPSPQHPHTP).

This sequence belongs to the peptidase S8 family.

The protein localises to the secreted. Functionally, secreted subtilisin-like serine protease with keratinolytic activity that contributes to pathogenicity. This Trichophyton tonsurans (Scalp ringworm fungus) protein is Subtilisin-like protease 1 (SUB1).